Reading from the N-terminus, the 174-residue chain is Secretory-abundant heat soluble protein 2 (174 aa).

Residues 1–19 form the signal peptide; the sequence is MHRFVLALVVFAGAAIVWA. The segment at 30 to 60 is SAHS-c1; sequence EWTGKPWMGKWESDPSKDENVEEFKKKLQLP. The segment at 77 to 105 is SAHS-c2; the sequence is YKKGDEYHHKIIINDAHYKNDIVFKLGQE. An N-linked (GlcNAc...) asparagine glycan is attached at Asn-111. Positions 118–172 are SAHS-c3; the sequence is KYEDKDGALVGSVHYTGTKEQSLDKTINNVFKLEGDHLVKTSTIEGVTMKRHYNK.

This sequence belongs to the Secretory-abundant heat soluble protein (SAHS) family.

It is found in the secreted. Functionally, secreted heat soluble protein acting as a molecular shield in water-deficient condition. Tardigrade-specific intrinsically disordered proteins (TDPs) are essential for desiccation tolerance by forming non-crystalline amorphous solids upon desiccation, and this vitrified state mirrors their protective capabilities. This Ramazzottius varieornatus (Water bear) protein is Secretory-abundant heat soluble protein 2.